The chain runs to 145 residues: U20-hexatoxin-Hi1a (145 aa).

A signal peptide spans 1 to 16 (MYQFLIIVILAAFVNG). 2 Thyroglobulin type-1 domains span residues 20–73 (KTEC…GQPM) and 82–145 (ACEC…RLEC). Intrachain disulfides connect Cys23-Cys45, Cys56-Cys63, Cys85-Cys106, Cys117-Cys124, and Cys126-Cys145.

Expressed by the venom gland.

Its subcellular location is the secreted. Cysteine proteinase inhibitor. This Hadronyche infensa (Fraser island funnel-web spider) protein is U20-hexatoxin-Hi1a.